The chain runs to 366 residues: Chorismate synthase (366 aa).

NADP(+) contacts are provided by arginine 47 and arginine 53. FMN is bound by residues arginine 124–serine 126, glycine 286, lysine 301–threonine 305, and arginine 327.

Belongs to the chorismate synthase family. As to quaternary structure, homotetramer. Requires FMNH2 as cofactor.

The enzyme catalyses 5-O-(1-carboxyvinyl)-3-phosphoshikimate = chorismate + phosphate. It participates in metabolic intermediate biosynthesis; chorismate biosynthesis; chorismate from D-erythrose 4-phosphate and phosphoenolpyruvate: step 7/7. Catalyzes the anti-1,4-elimination of the C-3 phosphate and the C-6 proR hydrogen from 5-enolpyruvylshikimate-3-phosphate (EPSP) to yield chorismate, which is the branch point compound that serves as the starting substrate for the three terminal pathways of aromatic amino acid biosynthesis. This reaction introduces a second double bond into the aromatic ring system. This is Chorismate synthase from Microcystis aeruginosa (strain NIES-843 / IAM M-2473).